Reading from the N-terminus, the 305-residue chain is Homoserine O-acetyltransferase (305 aa).

Cys-142 serves as the catalytic Acyl-thioester intermediate. Residues Lys-163 and Ser-192 each coordinate substrate. The Proton acceptor role is filled by His-235. Residue Glu-237 is part of the active site. Arg-249 is a binding site for substrate.

The protein belongs to the MetA family.

The protein resides in the cytoplasm. The catalysed reaction is L-homoserine + acetyl-CoA = O-acetyl-L-homoserine + CoA. It functions in the pathway amino-acid biosynthesis; L-methionine biosynthesis via de novo pathway; O-acetyl-L-homoserine from L-homoserine: step 1/1. Its function is as follows. Transfers an acetyl group from acetyl-CoA to L-homoserine, forming acetyl-L-homoserine. The sequence is that of Homoserine O-acetyltransferase from Roseobacter denitrificans (strain ATCC 33942 / OCh 114) (Erythrobacter sp. (strain OCh 114)).